A 284-amino-acid polypeptide reads, in one-letter code: Bifunctional protein FolD (284 aa).

NADP(+) is bound by residues 166-168 and Ile232; that span reads GAS.

It belongs to the tetrahydrofolate dehydrogenase/cyclohydrolase family. In terms of assembly, homodimer.

The catalysed reaction is (6R)-5,10-methylene-5,6,7,8-tetrahydrofolate + NADP(+) = (6R)-5,10-methenyltetrahydrofolate + NADPH. The enzyme catalyses (6R)-5,10-methenyltetrahydrofolate + H2O = (6R)-10-formyltetrahydrofolate + H(+). Its pathway is one-carbon metabolism; tetrahydrofolate interconversion. Catalyzes the oxidation of 5,10-methylenetetrahydrofolate to 5,10-methenyltetrahydrofolate and then the hydrolysis of 5,10-methenyltetrahydrofolate to 10-formyltetrahydrofolate. The protein is Bifunctional protein FolD of Stutzerimonas stutzeri (strain A1501) (Pseudomonas stutzeri).